Consider the following 251-residue polypeptide: Large ribosomal subunit protein uL3 (251 aa).

Disordered stretches follow at residues 140–162 (SHRSIGSTGGRQDPGKTFKNKKM) and 229–251 (AAPAGAVQAAQAAPEAPAAEENA). An N5-methylglutamine modification is found at glutamine 151.

The protein belongs to the universal ribosomal protein uL3 family. As to quaternary structure, part of the 50S ribosomal subunit. Forms a cluster with proteins L14 and L19. Methylated by PrmB.

In terms of biological role, one of the primary rRNA binding proteins, it binds directly near the 3'-end of the 23S rRNA, where it nucleates assembly of the 50S subunit. The polypeptide is Large ribosomal subunit protein uL3 (Methylobacterium nodulans (strain LMG 21967 / CNCM I-2342 / ORS 2060)).